Here is an 81-residue protein sequence, read N- to C-terminus: Cytochrome b559 subunit alpha (81 aa).

The helical transmembrane segment at 22–36 (VIHSITIPSLFIAGW) threads the bilayer. A heme-binding site is contributed by H24.

It belongs to the PsbE/PsbF family. In terms of assembly, heterodimer of an alpha subunit and a beta subunit. PSII is composed of 1 copy each of membrane proteins PsbA, PsbB, PsbC, PsbD, PsbE, PsbF, PsbH, PsbI, PsbJ, PsbK, PsbL, PsbM, PsbT, PsbX, PsbY, PsbZ, Psb30/Ycf12, at least 3 peripheral proteins of the oxygen-evolving complex and a large number of cofactors. It forms dimeric complexes. The cofactor is heme b.

The protein resides in the plastid. It is found in the chloroplast thylakoid membrane. Functionally, this b-type cytochrome is tightly associated with the reaction center of photosystem II (PSII). PSII is a light-driven water:plastoquinone oxidoreductase that uses light energy to abstract electrons from H(2)O, generating O(2) and a proton gradient subsequently used for ATP formation. It consists of a core antenna complex that captures photons, and an electron transfer chain that converts photonic excitation into a charge separation. In Cyanidioschyzon merolae (strain NIES-3377 / 10D) (Unicellular red alga), this protein is Cytochrome b559 subunit alpha.